A 346-amino-acid chain; its full sequence is Ribosomal RNA small subunit methyltransferase H (346 aa).

S-adenosyl-L-methionine-binding positions include Gly46–Tyr48, Asp63, Phe90, Asp113, and Gln120. Residues Gly270–Ser346 form a disordered region.

The protein belongs to the methyltransferase superfamily. RsmH family.

The protein localises to the cytoplasm. The catalysed reaction is cytidine(1402) in 16S rRNA + S-adenosyl-L-methionine = N(4)-methylcytidine(1402) in 16S rRNA + S-adenosyl-L-homocysteine + H(+). Its function is as follows. Specifically methylates the N4 position of cytidine in position 1402 (C1402) of 16S rRNA. This is Ribosomal RNA small subunit methyltransferase H from Brucella suis (strain ATCC 23445 / NCTC 10510).